Consider the following 470-residue polypeptide: ATP synthase subunit beta (470 aa).

G155 to T162 provides a ligand contact to ATP.

The protein belongs to the ATPase alpha/beta chains family. As to quaternary structure, F-type ATPases have 2 components, CF(1) - the catalytic core - and CF(0) - the membrane proton channel. CF(1) has five subunits: alpha(3), beta(3), gamma(1), delta(1), epsilon(1). CF(0) has three main subunits: a(1), b(2) and c(9-12). The alpha and beta chains form an alternating ring which encloses part of the gamma chain. CF(1) is attached to CF(0) by a central stalk formed by the gamma and epsilon chains, while a peripheral stalk is formed by the delta and b chains.

The protein localises to the cell membrane. It catalyses the reaction ATP + H2O + 4 H(+)(in) = ADP + phosphate + 5 H(+)(out). In terms of biological role, produces ATP from ADP in the presence of a proton gradient across the membrane. The catalytic sites are hosted primarily by the beta subunits. The polypeptide is ATP synthase subunit beta (Lacticaseibacillus casei (Lactobacillus casei)).